The following is a 343-amino-acid chain: MSDRQAALDMALKQIEKQFGKGSIMKLGEQAERKVSTVSSGSLALDVALGVGGYPRGRIIEIYGPESSGKTTVSLHAIAEVQRQGGQAAFIDAEHAMDPVYAQKLGVNIDELLLSQPDTGEQGLEIAEALVRSGAVDIIVIDSVAALVPKAEIEGDMGDSHVGLQARLMSQALRKLSGAINKSKTIAIFINQIREKVGVMFGNPETTPGGRALKFYSTVRLEVRRAEQLKQGNDIVGNKTKVKVVKNKVAPPFRVAEVDIMYGEGISREGEILDMASELDIVQKSGAWYSYNEERLGQGRENSKQFLKENTDLREEIAFFIREHHGISEDSGAEDMEDPSLLD.

Residue 64–71 (GPESSGKT) coordinates ATP.

It belongs to the RecA family.

The protein resides in the cytoplasm. Functionally, can catalyze the hydrolysis of ATP in the presence of single-stranded DNA, the ATP-dependent uptake of single-stranded DNA by duplex DNA, and the ATP-dependent hybridization of homologous single-stranded DNAs. It interacts with LexA causing its activation and leading to its autocatalytic cleavage. In Bacillus cereus (strain ATCC 10987 / NRS 248), this protein is Protein RecA.